We begin with the raw amino-acid sequence, 381 residues long: NF-kappa-B inhibitor-like protein 1 (381 aa).

The segment at 1-34 is disordered; that stretch reads MSNPSPQAPEEEASTSVCRPQSCSMASASRRHRR. Residues 14–27 are compositionally biased toward polar residues; it reads STSVCRPQSCSMAS. ANK repeat units lie at residues 64–93 and 97–134; these read AGQPPPLHRACARHDAPALCLLLRLGADPA and RHGDTALHAAARQGPDAYTDFFLPLLSRCPSAMGIKNK. Disordered regions lie at residues 132–167 and 186–298; these read KNKDGETPGQILGWGPPWDSAEEEEDEEVSKEREWR and EDDA…WRFG. Ser-151 bears the Phosphoserine mark. Acidic residues predominate over residues 151–160; that stretch reads SAEEEEDEEV. Basic and acidic residues-rich tracts occupy residues 205-218 and 237-290; these read RLAREHAQKQRQQL and RQHE…RGAE.

As to quaternary structure, interacts with CACTIN (via N-terminal domain); the interaction occurs in a pro-inflammatory-independent manner. As to expression, high expression found in heart muscle, liver, kidney and skin. Not detected in spleen, lung and brain.

The protein resides in the nucleus. In terms of biological role, involved in the regulation of innate immune response. Acts as negative regulator of Toll-like receptor and interferon-regulatory factor (IRF) signaling pathways. Contributes to the negative regulation of transcriptional activation of NF-kappa-B target genes in response to endogenous pro-inflammatory stimuli. In Mus musculus (Mouse), this protein is NF-kappa-B inhibitor-like protein 1 (Nfkbil1).